Reading from the N-terminus, the 246-residue chain is Pyridoxine 5'-phosphate synthase (246 aa).

Residue Asn-6 coordinates 3-amino-2-oxopropyl phosphate. 8–9 (DH) contributes to the 1-deoxy-D-xylulose 5-phosphate binding site. A 3-amino-2-oxopropyl phosphate-binding site is contributed by Arg-17. His-49 acts as the Proton acceptor in catalysis. 2 residues coordinate 1-deoxy-D-xylulose 5-phosphate: Arg-51 and His-56. Catalysis depends on Glu-76, which acts as the Proton acceptor. Thr-106 provides a ligand contact to 1-deoxy-D-xylulose 5-phosphate. The active-site Proton donor is the His-196. 3-amino-2-oxopropyl phosphate-binding positions include Gly-197 and 219–220 (GH).

This sequence belongs to the PNP synthase family. Homooctamer; tetramer of dimers.

Its subcellular location is the cytoplasm. The catalysed reaction is 3-amino-2-oxopropyl phosphate + 1-deoxy-D-xylulose 5-phosphate = pyridoxine 5'-phosphate + phosphate + 2 H2O + H(+). Its pathway is cofactor biosynthesis; pyridoxine 5'-phosphate biosynthesis; pyridoxine 5'-phosphate from D-erythrose 4-phosphate: step 5/5. Catalyzes the complicated ring closure reaction between the two acyclic compounds 1-deoxy-D-xylulose-5-phosphate (DXP) and 3-amino-2-oxopropyl phosphate (1-amino-acetone-3-phosphate or AAP) to form pyridoxine 5'-phosphate (PNP) and inorganic phosphate. In Akkermansia muciniphila (strain ATCC BAA-835 / DSM 22959 / JCM 33894 / BCRC 81048 / CCUG 64013 / CIP 107961 / Muc), this protein is Pyridoxine 5'-phosphate synthase.